The following is a 570-amino-acid chain: Proline--tRNA ligase (570 aa).

Belongs to the class-II aminoacyl-tRNA synthetase family. ProS type 1 subfamily. As to quaternary structure, homodimer.

The protein resides in the cytoplasm. It carries out the reaction tRNA(Pro) + L-proline + ATP = L-prolyl-tRNA(Pro) + AMP + diphosphate. Its function is as follows. Catalyzes the attachment of proline to tRNA(Pro) in a two-step reaction: proline is first activated by ATP to form Pro-AMP and then transferred to the acceptor end of tRNA(Pro). As ProRS can inadvertently accommodate and process non-cognate amino acids such as alanine and cysteine, to avoid such errors it has two additional distinct editing activities against alanine. One activity is designated as 'pretransfer' editing and involves the tRNA(Pro)-independent hydrolysis of activated Ala-AMP. The other activity is designated 'posttransfer' editing and involves deacylation of mischarged Ala-tRNA(Pro). The misacylated Cys-tRNA(Pro) is not edited by ProRS. This is Proline--tRNA ligase from Clostridium perfringens (strain SM101 / Type A).